Consider the following 930-residue polypeptide: APC membrane recruitment protein 1 (930 aa).

Disordered regions lie at residues 1–33 (MEIATRCEVGAMRGPSSDSVSHDIPQPQSPPSV), 55–76 (FFGGRGRSQRKGSSKTGVTKSQ), 104–133 (CSEPQKSQEDHGKSQSLPRQRRGLRGLFSS), 161–193 (TVPGALPSVSDRGDYHGDSQGEELVPDVPNQTT), 222–245 (EMDKRRRAEEEGIGEDEKTGRQEG), and 366–454 (EVCY…PRDS). A compositionally biased stretch (basic and acidic residues) spans 222–242 (EMDKRRRAEEEGIGEDEKTGR). 2 stretches are compositionally biased toward polar residues: residues 377–399 (DSPSLTPDQQLSSIRATSSSSPM) and 413–424 (SPQSDRQESVPN). Positions 439-452 (EESRERPHQERLPR) are enriched in basic and acidic residues.

Belongs to the Amer family.

It is found in the cytoplasm. The protein localises to the cell membrane. Its subcellular location is the nucleus. Regulator of the canonical Wnt signaling pathway. Acts by specifically binding phosphatidylinositol 4,5-bisphosphate (PtdIns(4,5)P2), translocating to the cell membrane and interacting with key regulators of the canonical Wnt signaling pathway, such as components of the beta-catenin destruction complex. Acts both as a positive and negative regulator of the Wnt signaling pathway, depending on the context. The polypeptide is APC membrane recruitment protein 1 (amer1) (Danio rerio (Zebrafish)).